The chain runs to 401 residues: Argininosuccinate synthase (401 aa).

Residues 11 to 19 (AYSGGLDTS) and alanine 38 contribute to the ATP site. L-citrulline-binding residues include tyrosine 89 and serine 94. Glycine 119 contributes to the ATP binding site. L-aspartate is bound by residues threonine 121, asparagine 125, and aspartate 126. Asparagine 125 contributes to the L-citrulline binding site. L-citrulline contacts are provided by arginine 129, serine 177, serine 186, glutamate 262, and tyrosine 274.

Belongs to the argininosuccinate synthase family. Type 1 subfamily. As to quaternary structure, homotetramer.

Its subcellular location is the cytoplasm. It catalyses the reaction L-citrulline + L-aspartate + ATP = 2-(N(omega)-L-arginino)succinate + AMP + diphosphate + H(+). The protein operates within amino-acid biosynthesis; L-arginine biosynthesis; L-arginine from L-ornithine and carbamoyl phosphate: step 2/3. This chain is Argininosuccinate synthase, found in Nitratidesulfovibrio vulgaris (strain DSM 19637 / Miyazaki F) (Desulfovibrio vulgaris).